The sequence spans 285 residues: NAD kinase (285 aa).

The active-site Proton acceptor is Asp68. NAD(+)-binding positions include 68–69 (DG), 142–143 (ND), Arg153, Lys170, Asp172, 183–188 (TAYNLS), and Gln242.

This sequence belongs to the NAD kinase family. Requires a divalent metal cation as cofactor.

The protein localises to the cytoplasm. It catalyses the reaction NAD(+) + ATP = ADP + NADP(+) + H(+). Involved in the regulation of the intracellular balance of NAD and NADP, and is a key enzyme in the biosynthesis of NADP. Catalyzes specifically the phosphorylation on 2'-hydroxyl of the adenosine moiety of NAD to yield NADP. The chain is NAD kinase from Syntrophotalea carbinolica (strain DSM 2380 / NBRC 103641 / GraBd1) (Pelobacter carbinolicus).